A 597-amino-acid chain; its full sequence is U3 small nucleolar RNA-associated protein 6 homolog (597 aa).

HAT repeat units lie at residues 121 to 153 (ATKT…WEME), 156 to 188 (LSSE…MELM), 304 to 335 (RKEE…FCLE), 488 to 520 (GGYK…FEKE), and 524 to 557 (CNMA…EELN).

The protein belongs to the UTP6 family. As to quaternary structure, part of the small subunit (SSU) processome, composed of more than 70 proteins and the RNA chaperone small nucleolar RNA (snoRNA) U3.

The protein resides in the nucleus. Its subcellular location is the nucleolus. Part of the small subunit (SSU) processome, first precursor of the small eukaryotic ribosomal subunit. During the assembly of the SSU processome in the nucleolus, many ribosome biogenesis factors, an RNA chaperone and ribosomal proteins associate with the nascent pre-rRNA and work in concert to generate RNA folding, modifications, rearrangements and cleavage as well as targeted degradation of pre-ribosomal RNA by the RNA exosome. Involved in nucleolar processing of pre-18S ribosomal RNA. This Homo sapiens (Human) protein is U3 small nucleolar RNA-associated protein 6 homolog.